Consider the following 586-residue polypeptide: Dihydroxy-acid dehydratase 2 (586 aa).

Residue C68 participates in [2Fe-2S] cluster binding. D100 serves as a coordination point for Mg(2+). C141 is a binding site for [2Fe-2S] cluster. Positions 142 and 143 each coordinate Mg(2+). The residue at position 143 (K143) is an N6-carboxylysine. [2Fe-2S] cluster is bound at residue C213. E463 lines the Mg(2+) pocket. Catalysis depends on S489, which acts as the Proton acceptor.

The protein belongs to the IlvD/Edd family. As to quaternary structure, homodimer. [2Fe-2S] cluster serves as cofactor. Requires Mg(2+) as cofactor.

The enzyme catalyses (2R)-2,3-dihydroxy-3-methylbutanoate = 3-methyl-2-oxobutanoate + H2O. It carries out the reaction (2R,3R)-2,3-dihydroxy-3-methylpentanoate = (S)-3-methyl-2-oxopentanoate + H2O. Its pathway is amino-acid biosynthesis; L-isoleucine biosynthesis; L-isoleucine from 2-oxobutanoate: step 3/4. It participates in amino-acid biosynthesis; L-valine biosynthesis; L-valine from pyruvate: step 3/4. Functionally, functions in the biosynthesis of branched-chain amino acids. Catalyzes the dehydration of (2R,3R)-2,3-dihydroxy-3-methylpentanoate (2,3-dihydroxy-3-methylvalerate) into 2-oxo-3-methylpentanoate (2-oxo-3-methylvalerate) and of (2R)-2,3-dihydroxy-3-methylbutanoate (2,3-dihydroxyisovalerate) into 2-oxo-3-methylbutanoate (2-oxoisovalerate), the penultimate precursor to L-isoleucine and L-valine, respectively. In Mesorhizobium japonicum (strain LMG 29417 / CECT 9101 / MAFF 303099) (Mesorhizobium loti (strain MAFF 303099)), this protein is Dihydroxy-acid dehydratase 2.